The primary structure comprises 325 residues: Glycerol-3-phosphate dehydrogenase [NAD(P)+] (325 aa).

NADPH is bound by residues Ser-14, Phe-15, Arg-35, and Lys-109. 2 residues coordinate sn-glycerol 3-phosphate: Lys-109 and Gly-137. Position 141 (Ala-141) interacts with NADPH. Sn-glycerol 3-phosphate contacts are provided by Lys-192, Asp-247, Ser-257, Arg-258, and Asn-259. The Proton acceptor role is filled by Lys-192. Arg-258 is a binding site for NADPH. NADPH is bound by residues Leu-282 and Glu-284.

Belongs to the NAD-dependent glycerol-3-phosphate dehydrogenase family.

It is found in the cytoplasm. The catalysed reaction is sn-glycerol 3-phosphate + NAD(+) = dihydroxyacetone phosphate + NADH + H(+). The enzyme catalyses sn-glycerol 3-phosphate + NADP(+) = dihydroxyacetone phosphate + NADPH + H(+). It participates in membrane lipid metabolism; glycerophospholipid metabolism. Functionally, catalyzes the reduction of the glycolytic intermediate dihydroxyacetone phosphate (DHAP) to sn-glycerol 3-phosphate (G3P), the key precursor for phospholipid synthesis. The polypeptide is Glycerol-3-phosphate dehydrogenase [NAD(P)+] (Rickettsia conorii (strain ATCC VR-613 / Malish 7)).